The primary structure comprises 178 residues: Interleukin-10 (178 aa).

The N-terminal stretch at 1–18 (MHSSALLCCLVFLTGVRA) is a signal peptide. 2 disulfides stabilise this stretch: Cys-30-Cys-126 and Cys-80-Cys-132. An N-linked (GlcNAc...) asparagine glycan is attached at Asn-134.

This sequence belongs to the IL-10 family. As to quaternary structure, homodimer. Interacts with IL10RA and IL10RB.

Its subcellular location is the secreted. Functionally, major immune regulatory cytokine that acts on many cells of the immune system where it has profound anti-inflammatory functions, limiting excessive tissue disruption caused by inflammation. Mechanistically, IL10 binds to its heterotetrameric receptor comprising IL10RA and IL10RB leading to JAK1 and STAT2-mediated phosphorylation of STAT3. In turn, STAT3 translocates to the nucleus where it drives expression of anti-inflammatory mediators. Targets antigen-presenting cells (APCs) such as macrophages and monocytes and inhibits their release of pro-inflammatory cytokines including granulocyte-macrophage colony-stimulating factor /GM-CSF, granulocyte colony-stimulating factor/G-CSF, IL-1 alpha, IL-1 beta, IL-6, IL-8 and TNF-alpha. Also interferes with antigen presentation by reducing the expression of MHC-class II and co-stimulatory molecules, thereby inhibiting their ability to induce T cell activation. In addition, controls the inflammatory response of macrophages by reprogramming essential metabolic pathways including mTOR signaling. The protein is Interleukin-10 (IL10) of Callithrix jacchus (White-tufted-ear marmoset).